Here is a 756-residue protein sequence, read N- to C-terminus: Glutathione biosynthesis bifunctional protein GshAB (756 aa).

Residues 1-338 form a glutamate--cysteine ligase region; it reads MNYRELMQKK…TGDIFNEQVA (338 aa). The ATP-grasp domain maps to 493 to 751; it reads KKILSAAGFH…LTMDVLKLLY (259 aa). 520 to 578 provides a ligand contact to ATP; that stretch reads LRYANKAFVVKPKSTNYGLGITIFKEGASLEDFTEALRIAFKEDTAVLIEEFLPGTEYR. Asp700, Glu721, and Asn723 together coordinate Mg(2+). Residues Asp700, Glu721, and Asn723 each contribute to the Mn(2+) site.

The protein in the N-terminal section; belongs to the glutamate--cysteine ligase type 1 family. Type 2 subfamily. Monomer. It depends on Mg(2+) as a cofactor. Mn(2+) serves as cofactor.

The catalysed reaction is L-cysteine + L-glutamate + ATP = gamma-L-glutamyl-L-cysteine + ADP + phosphate + H(+). It carries out the reaction gamma-L-glutamyl-L-cysteine + glycine + ATP = glutathione + ADP + phosphate + H(+). The protein operates within sulfur metabolism; glutathione biosynthesis; glutathione from L-cysteine and L-glutamate: step 1/2. It functions in the pathway sulfur metabolism; glutathione biosynthesis; glutathione from L-cysteine and L-glutamate: step 2/2. Functionally, synthesizes glutathione from L-glutamate and L-cysteine via gamma-L-glutamyl-L-cysteine. This is Glutathione biosynthesis bifunctional protein GshAB from Enterococcus faecalis (strain ATCC 700802 / V583).